The following is an 89-amino-acid chain: NADH-ubiquinone oxidoreductase chain 4L (89 aa).

Helical transmembrane passes span 1-21, 22-42, and 57-77; these read MNLT…NRKN, IILM…LILV, and IYII…LVAF.

The protein belongs to the complex I subunit 4L family.

The protein localises to the mitochondrion membrane. It catalyses the reaction a ubiquinone + NADH + 5 H(+)(in) = a ubiquinol + NAD(+) + 4 H(+)(out). Functionally, core subunit of the mitochondrial membrane respiratory chain NADH dehydrogenase (Complex I) that is believed to belong to the minimal assembly required for catalysis. Complex I functions in the transfer of electrons from NADH to the respiratory chain. The immediate electron acceptor for the enzyme is believed to be ubiquinone. This chain is NADH-ubiquinone oxidoreductase chain 4L (ND4L), found in Cryphonectria parasitica (Chestnut blight fungus).